The chain runs to 191 residues: Probable DNA-directed RNA polymerase subunit delta (191 aa).

The HTH HARE-type domain occupies 14 to 83; that stretch reads LSMIEVARAI…GENKWGLRSW (70 aa). A disordered region spans residues 118 to 191; that stretch reads DEDAIDYRDD…EDEEDEEPVL (74 aa).

Belongs to the RpoE family. In terms of assembly, RNAP is composed of a core of 2 alpha, a beta and a beta' subunits. The core is associated with a delta subunit and one of several sigma factors.

Functionally, participates in both the initiation and recycling phases of transcription. In the presence of the delta subunit, RNAP displays an increased specificity of transcription, a decreased affinity for nucleic acids, and an increased efficiency of RNA synthesis because of enhanced recycling. The protein is Probable DNA-directed RNA polymerase subunit delta of Streptococcus pyogenes serotype M18 (strain MGAS8232).